The chain runs to 149 residues: D-aminoacyl-tRNA deacylase (149 aa).

The Gly-cisPro motif, important for rejection of L-amino acids motif lies at 137–138 (GP).

It belongs to the DTD family. In terms of assembly, homodimer.

It is found in the cytoplasm. The catalysed reaction is glycyl-tRNA(Ala) + H2O = tRNA(Ala) + glycine + H(+). The enzyme catalyses a D-aminoacyl-tRNA + H2O = a tRNA + a D-alpha-amino acid + H(+). An aminoacyl-tRNA editing enzyme that deacylates mischarged D-aminoacyl-tRNAs. Also deacylates mischarged glycyl-tRNA(Ala), protecting cells against glycine mischarging by AlaRS. Acts via tRNA-based rather than protein-based catalysis; rejects L-amino acids rather than detecting D-amino acids in the active site. By recycling D-aminoacyl-tRNA to D-amino acids and free tRNA molecules, this enzyme counteracts the toxicity associated with the formation of D-aminoacyl-tRNA entities in vivo and helps enforce protein L-homochirality. In Clostridium beijerinckii (strain ATCC 51743 / NCIMB 8052) (Clostridium acetobutylicum), this protein is D-aminoacyl-tRNA deacylase.